The following is a 403-amino-acid chain: Acetate kinase (403 aa).

Asparagine 8 is a binding site for Mg(2+). Residue lysine 15 participates in ATP binding. Arginine 90 contacts substrate. Aspartate 147 acts as the Proton donor/acceptor in catalysis. ATP-binding positions include 207–211, 282–284, and 330–334; these read HLGSG, DLR, and GVGEN. Residue glutamate 384 participates in Mg(2+) binding.

The protein belongs to the acetokinase family. As to quaternary structure, homodimer. Mg(2+) is required as a cofactor. It depends on Mn(2+) as a cofactor.

It localises to the cytoplasm. It carries out the reaction acetate + ATP = acetyl phosphate + ADP. It participates in metabolic intermediate biosynthesis; acetyl-CoA biosynthesis; acetyl-CoA from acetate: step 1/2. In terms of biological role, catalyzes the formation of acetyl phosphate from acetate and ATP. Can also catalyze the reverse reaction. The polypeptide is Acetate kinase (Exiguobacterium sibiricum (strain DSM 17290 / CCUG 55495 / CIP 109462 / JCM 13490 / 255-15)).